We begin with the raw amino-acid sequence, 229 residues long: Large ribosomal subunit protein uL1 (229 aa).

This sequence belongs to the universal ribosomal protein uL1 family. As to quaternary structure, part of the 50S ribosomal subunit.

Binds directly to 23S rRNA. The L1 stalk is quite mobile in the ribosome, and is involved in E site tRNA release. Its function is as follows. Protein L1 is also a translational repressor protein, it controls the translation of the L11 operon by binding to its mRNA. The chain is Large ribosomal subunit protein uL1 from Streptococcus suis (strain 98HAH33).